A 436-amino-acid chain; its full sequence is Prenyltransferase nscD (436 aa).

It belongs to the tryptophan dimethylallyltransferase family.

The protein operates within secondary metabolite biosynthesis. Functionally, prenyltransferase; part of the gene cluster that mediates the biosynthesis of neosartoricin B, a prenylated anthracenone that probably exhibits T-cell antiproliferative activity, suggestive of a physiological role as an immunosuppressive agent. The non-reducing polyketide synthase nscA probably synthesizes and cyclizes the decaketide backbone. The hydrolase nscB then mediates the product release through hydrolysis followed by spontaneous decarboxylation. The prenyltransferase nscD catalyzes the addition of the dimethylallyl group to the aromatic C5. The FAD-dependent monooxygenase nscC is then responsible for the stereospecific hydroxylation at C2. Neosartoricin B can be converted into two additional compounds neosartoricins C and D. Neosartoricin C is a spirocyclic compound that is cyclized through the attack of C3 hydroxyl on C14, followed by dehydration. On the other hand, neosartoricin D is a further cyclized compound in which attack of C2 on C14 in neosartoricin C results in the formation of the acetal-containing dioxabicyclo-octanone ring. Both of these compounds are novel and possibly represent related metabolites of the gene cluster. This Trichophyton tonsurans (strain CBS 112818) (Scalp ringworm fungus) protein is Prenyltransferase nscD.